We begin with the raw amino-acid sequence, 265 residues long: Protein IL-40 (265 aa).

An N-terminal signal peptide occupies residues 1 to 20 (MGLPGLFCLAVLAASSFSKA). N-linked (GlcNAc...) asparagine glycans are attached at residues asparagine 86 and asparagine 132.

In terms of tissue distribution, expressed in fetal liver and bone marrow. Expressed in peripheral blood lymphocyte B cells.

The protein localises to the secreted. Functionally, probable B cell-associated cytokine that plays a role in the regulation of humoral immune responses. Involved in lymphocyte B cell development and immunoglobulin/IgA production. This chain is Protein IL-40, found in Homo sapiens (Human).